The chain runs to 268 residues: MEMO1 family protein Ta0237 (268 aa).

The protein belongs to the MEMO1 family.

The chain is MEMO1 family protein Ta0237 from Thermoplasma acidophilum (strain ATCC 25905 / DSM 1728 / JCM 9062 / NBRC 15155 / AMRC-C165).